Here is a 953-residue protein sequence, read N- to C-terminus: Protein translocase subunit SecA 1 (953 aa).

ATP contacts are provided by residues Gln83, 101–105, and Asp490; that span reads GEGKT. Residues 854–867 show a composition bias toward low complexity; it reads AAAAAAKASDSAAK. The disordered stretch occupies residues 854-953; it reads AAAAAAKASD…DRPAKSHRKG (100 aa). Positions 929-947 are enriched in basic and acidic residues; that stretch reads SRRERREAARKQAKADRPA.

The protein belongs to the SecA family. Monomer and homodimer. Part of the essential Sec protein translocation apparatus which comprises SecA, SecYEG and auxiliary proteins SecDF. Other proteins may also be involved.

It localises to the cell membrane. The protein localises to the cytoplasm. It catalyses the reaction ATP + H2O + cellular proteinSide 1 = ADP + phosphate + cellular proteinSide 2.. Functionally, part of the Sec protein translocase complex. Interacts with the SecYEG preprotein conducting channel. Has a central role in coupling the hydrolysis of ATP to the transfer of proteins into and across the cell membrane, serving as an ATP-driven molecular motor driving the stepwise translocation of polypeptide chains across the membrane. The polypeptide is Protein translocase subunit SecA 1 (Mycolicibacterium smegmatis (strain ATCC 700084 / mc(2)155) (Mycobacterium smegmatis)).